Consider the following 670-residue polypeptide: DNA ligase (670 aa).

NAD(+) is bound by residues 34–38, 83–84, and Glu-112; these read DAEYD and SL. Residue Lys-114 is the N6-AMP-lysine intermediate of the active site. Residues Arg-135, Glu-169, Lys-285, and Lys-309 each coordinate NAD(+). Positions 403, 406, 421, and 426 each coordinate Zn(2+). Residues 589 to 670 enclose the BRCT domain; the sequence is PASSVLAGKT…FLQEISREEQ (82 aa).

The protein belongs to the NAD-dependent DNA ligase family. LigA subfamily. The cofactor is Mg(2+). Mn(2+) serves as cofactor.

The catalysed reaction is NAD(+) + (deoxyribonucleotide)n-3'-hydroxyl + 5'-phospho-(deoxyribonucleotide)m = (deoxyribonucleotide)n+m + AMP + beta-nicotinamide D-nucleotide.. Functionally, DNA ligase that catalyzes the formation of phosphodiester linkages between 5'-phosphoryl and 3'-hydroxyl groups in double-stranded DNA using NAD as a coenzyme and as the energy source for the reaction. It is essential for DNA replication and repair of damaged DNA. This is DNA ligase from Geobacillus thermodenitrificans (strain NG80-2).